We begin with the raw amino-acid sequence, 956 residues long: Zinc fingers and homeoboxes protein 3 (956 aa).

A required for nuclear localization region spans residues 1–107; the sequence is MASKRKSTTP…SEHTDFNKDP (107 aa). The disordered stretch occupies residues 22–66; that stretch reads DASMEAQPAETLPEGPQQDLPPEASAASSEAAQNPSSTDGSTLAN. Low complexity predominate over residues 42 to 58; that stretch reads PPEASAASSEAAQNPSS. C2H2-type zinc fingers lie at residues 77–100 and 109–132; these read YSCK…NSEH and FVCS…ATCH. Positions 242-488 are required for homodimerization and interaction with NFYA; it reads ASASSAKNPH…LLTACPSITS (247 aa). The required for repressor activity stretch occupies residues 303-502; the sequence is LSSIPTYNAA…DASIYKNKKS (200 aa). DNA-binding regions (homeobox) lie at residues 304–363 and 494–553; these read SSIP…GISW and ASIY…RNLK. A required for nuclear localization region spans residues 497 to 555; the sequence is YKNKKSHEQLSALKGSFCRNQFPGQSEVEHLTKVTGLSTREVRKWFSDRRYHCRNLKGS. Disordered regions lie at residues 598 to 618 and 666 to 695; these read PSAK…KYKE and KVNA…GEED. S599 and S604 each carry phosphoserine. The segment at residues 612–671 is a DNA-binding region (homeobox 3); the sequence is TPTKYKERAPEQLRALESSFAQNPLPLDEELDRLRSETKMTRREIDSWFSERRKKVNAEE. A compositionally biased stretch (basic and acidic residues) spans 666–677; the sequence is KVNAEETKKAEE. A compositionally biased stretch (acidic residues) spans 679-695; the sequence is ASQEEEEAAEDEGGEED. A phosphoserine mark is found at S680, S708, and S723. DNA-binding regions (homeobox) lie at residues 764–823 and 835–894; these read PGKV…KNGQ and FPPG…TRAV. The tract at residues 890–956 is disordered; the sequence is ETRAVADTGS…PQAGRQLETD (67 aa). Phosphoserine is present on residues S927 and S946.

This sequence belongs to the ZHX family. As to quaternary structure, homodimer (via homeobox domain 1). Heterodimer with ZHX1 (via homeobox domain 1). Heterodimer with ZHX2 (via homeobox domain 1). Heterodimerization with ZHX1 is a prerequisite for repressor activity. Interacts with NFYA. As to expression, widely expressed. High expression in kidney. Expressed during osteogenic differentiation.

The protein localises to the nucleus. In terms of biological role, acts as a transcriptional repressor. Involved in the early stages of mesenchymal stem cell (MSC) osteogenic differentiation. Is a regulator of podocyte gene expression during primary glomerula disease. Binds to promoter DNA. This Homo sapiens (Human) protein is Zinc fingers and homeoboxes protein 3 (ZHX3).